The primary structure comprises 317 residues: Ribosomal RNA large subunit methyltransferase F (317 aa).

Belongs to the methyltransferase superfamily. METTL16/RlmF family.

It is found in the cytoplasm. It catalyses the reaction adenosine(1618) in 23S rRNA + S-adenosyl-L-methionine = N(6)-methyladenosine(1618) in 23S rRNA + S-adenosyl-L-homocysteine + H(+). In terms of biological role, specifically methylates the adenine in position 1618 of 23S rRNA. The chain is Ribosomal RNA large subunit methyltransferase F from Pseudomonas putida (strain ATCC 700007 / DSM 6899 / JCM 31910 / BCRC 17059 / LMG 24140 / F1).